The primary structure comprises 1051 residues: Exportin-T (1051 aa).

This sequence belongs to the exportin family.

The protein resides in the nucleus. It is found in the cytoplasm. Functionally, tRNA nucleus export receptor which facilitates tRNA translocation across the nuclear pore complex. Involved in pre-tRNA splicing, probably by affecting the interaction of pre-tRNA with splicing endonuclease. This Eremothecium gossypii (strain ATCC 10895 / CBS 109.51 / FGSC 9923 / NRRL Y-1056) (Yeast) protein is Exportin-T (LOS1).